The following is a 151-amino-acid chain: Transcription elongation factor GreA (151 aa).

The stretch at 41–62 (AEYHAAREKQSFIEGRIKELEA) forms a coiled coil.

It belongs to the GreA/GreB family.

Necessary for efficient RNA polymerase transcription elongation past template-encoded arresting sites. The arresting sites in DNA have the property of trapping a certain fraction of elongating RNA polymerases that pass through, resulting in locked ternary complexes. Cleavage of the nascent transcript by cleavage factors such as GreA or GreB allows the resumption of elongation from the new 3'terminus. GreA releases sequences of 2 to 3 nucleotides. The polypeptide is Transcription elongation factor GreA (Cereibacter sphaeroides (strain ATCC 17023 / DSM 158 / JCM 6121 / CCUG 31486 / LMG 2827 / NBRC 12203 / NCIMB 8253 / ATH 2.4.1.) (Rhodobacter sphaeroides)).